Consider the following 301-residue polypeptide: Amylovoran biosynthesis glycosyltransferase AmsB (301 aa).

This sequence belongs to the glycosyltransferase 2 family.

It functions in the pathway glycan metabolism; exopolysaccharide biosynthesis. In terms of biological role, involved in the biosynthesis of amylovoran, which functions as a virulence factor. May function as a glycosyl transferase which transfers galactose from UDP-galactose to a lipid-linked amylovoran-subunit precursor. The polypeptide is Amylovoran biosynthesis glycosyltransferase AmsB (amsB) (Erwinia amylovora (Fire blight bacteria)).